An 89-amino-acid polypeptide reads, in one-letter code: MALVQEKKQELVQKYKRHEKDTGSPEVQVALLSERIAYLTEHFKTHKKDHHSRRGLLKLVGQRRRLLDYLRTIDQGRYKTLIDQLGIRK.

The protein belongs to the universal ribosomal protein uS15 family. In terms of assembly, part of the 30S ribosomal subunit. Forms a bridge to the 50S subunit in the 70S ribosome, contacting the 23S rRNA.

Functionally, one of the primary rRNA binding proteins, it binds directly to 16S rRNA where it helps nucleate assembly of the platform of the 30S subunit by binding and bridging several RNA helices of the 16S rRNA. In terms of biological role, forms an intersubunit bridge (bridge B4) with the 23S rRNA of the 50S subunit in the ribosome. In Anaeromyxobacter dehalogenans (strain 2CP-1 / ATCC BAA-258), this protein is Small ribosomal subunit protein uS15.